We begin with the raw amino-acid sequence, 160 residues long: Eukaryotic translation initiation factor 5A-2 (160 aa).

Over residues 1–12 (MSDEEHHFESKA) the composition is skewed to basic and acidic residues. Positions 1–21 (MSDEEHHFESKADAGASKTFP) are disordered. Lys52 is modified (hypusine).

This sequence belongs to the eIF-5A family. Post-translationally, lys-52 undergoes hypusination, a unique post-translational modification that consists in the addition of a butylamino group from spermidine to lysine side chain, leading to the formation of the unusual amino acid hypusine. eIF-5As are the only known proteins to undergo this modification, which is essential for their function.

Translation factor that promotes translation elongation and termination, particularly upon ribosome stalling at specific amino acid sequence contexts. Binds between the exit (E) and peptidyl (P) site of the ribosome and promotes rescue of stalled ribosome: specifically required for efficient translation of polyproline-containing peptides as well as other motifs that stall the ribosome. Acts as a ribosome quality control (RQC) cofactor by joining the RQC complex to facilitate peptidyl transfer during CAT tailing step. The chain is Eukaryotic translation initiation factor 5A-2 from Solanum lycopersicum (Tomato).